A 1117-amino-acid polypeptide reads, in one-letter code: DNA polymerase II large subunit (1117 aa).

The segment covering 279–294 has biased composition (basic and acidic residues); the sequence is STKEEEKKKEESSENK. Residues 279-299 are disordered; sequence STKEEEKKKEESSENKPKKKA.

Belongs to the archaeal DNA polymerase II family. In terms of assembly, heterodimer of a large subunit and a small subunit.

The catalysed reaction is DNA(n) + a 2'-deoxyribonucleoside 5'-triphosphate = DNA(n+1) + diphosphate. It carries out the reaction Exonucleolytic cleavage in the 3'- to 5'-direction to yield nucleoside 5'-phosphates.. Its function is as follows. Possesses two activities: a DNA synthesis (polymerase) and an exonucleolytic activity that degrades single-stranded DNA in the 3'- to 5'-direction. Has a template-primer preference which is characteristic of a replicative DNA polymerase. The chain is DNA polymerase II large subunit from Methanosphaera stadtmanae (strain ATCC 43021 / DSM 3091 / JCM 11832 / MCB-3).